Reading from the N-terminus, the 273-residue chain is Nitrogenase iron protein 2 (273 aa).

Gly-8–Ser-15 is an ATP binding site. [4Fe-4S] cluster is bound at residue Cys-95. Arg-98 is subject to ADP-ribosylarginine; by dinitrogenase reductase ADP-ribosyltransferase. Cys-130 lines the [4Fe-4S] cluster pocket.

This sequence belongs to the NifH/BchL/ChlL family. Homodimer. The cofactor is [4Fe-4S] cluster. Post-translationally, the reversible ADP-ribosylation of Arg-98 inactivates the nitrogenase reductase and regulates nitrogenase activity.

It carries out the reaction N2 + 8 reduced [2Fe-2S]-[ferredoxin] + 16 ATP + 16 H2O = H2 + 8 oxidized [2Fe-2S]-[ferredoxin] + 2 NH4(+) + 16 ADP + 16 phosphate + 6 H(+). Functionally, the key enzymatic reactions in nitrogen fixation are catalyzed by the nitrogenase complex, which has 2 components: the iron protein and the molybdenum-iron protein. The sequence is that of Nitrogenase iron protein 2 (nifH2) from Methanosarcina barkeri.